Reading from the N-terminus, the 308-residue chain is uncharacterized protein (308 aa).

Residues 1 to 19 (MKLLLILILIINNYNLCLS) form the signal peptide. Asn-25 and Asn-300 each carry an N-linked (GlcNAc...) asparagine glycan.

It is found in the secreted. This is an uncharacterized protein from Dictyostelium discoideum (Social amoeba).